Here is a 245-residue protein sequence, read N- to C-terminus: Nicotinamide/nicotinic acid mononucleotide adenylyltransferase 3 (245 aa).

Residues S14 and F15 each coordinate NAD(+). H22 and K56 together coordinate ATP. Residues W90, T93, G134, and D136 each coordinate NAD(+). K139 is a binding site for ATP. Residues L146, W147, R166, and N197 each coordinate NAD(+). 202-205 (TYVR) lines the ATP pocket.

The protein belongs to the eukaryotic NMN adenylyltransferase family. As to quaternary structure, homotetramer. Mg(2+) is required as a cofactor.

It is found in the mitochondrion. It catalyses the reaction beta-nicotinamide D-ribonucleotide + ATP + H(+) = diphosphate + NAD(+). It carries out the reaction nicotinate beta-D-ribonucleotide + ATP + H(+) = deamido-NAD(+) + diphosphate. Its pathway is cofactor biosynthesis; NAD(+) biosynthesis; NAD(+) from nicotinamide D-ribonucleotide: step 1/1. It functions in the pathway cofactor biosynthesis; NAD(+) biosynthesis; deamido-NAD(+) from nicotinate D-ribonucleotide: step 1/1. Activity is strongly inhibited by galotannin. Inhibited by P1-(adenosine-5')-P4-(nicotinic-acid-riboside-5')-tetraphosphate (Nap4AD). Catalyzes the formation of NAD(+) from nicotinamide mononucleotide (NMN) and ATP. Can also use the deamidated form; nicotinic acid mononucleotide (NaMN) as substrate with the same efficiency. Can use triazofurin monophosphate (TrMP) as substrate. Can also use GTP and ITP as nucleotide donors. Also catalyzes the reverse reaction, i.e. the pyrophosphorolytic cleavage of NAD(+). For the pyrophosphorolytic activity, can use NAD(+), NADH, NaAD, nicotinic acid adenine dinucleotide phosphate (NHD), nicotinamide guanine dinucleotide (NGD) as substrates. Fails to cleave phosphorylated dinucleotides NADP(+), NADPH and NaADP(+). Protects against axonal degeneration following injury. May be involved in the maintenance of axonal integrity. Also functions as a stress-response chaperone protein that prevents toxic aggregation of proteins; this function may be independent of its NAD(+) synthesis activity. This chain is Nicotinamide/nicotinic acid mononucleotide adenylyltransferase 3, found in Mus musculus (Mouse).